The chain runs to 76 residues: Large ribosomal subunit protein uL29 (76 aa).

Belongs to the universal ribosomal protein uL29 family.

The protein is Large ribosomal subunit protein uL29 of Corynebacterium aurimucosum (strain ATCC 700975 / DSM 44827 / CIP 107346 / CN-1) (Corynebacterium nigricans).